The primary structure comprises 358 residues: Peptide chain release factor 1 (358 aa).

N5-methylglutamine is present on Gln233.

It belongs to the prokaryotic/mitochondrial release factor family. Post-translationally, methylated by PrmC. Methylation increases the termination efficiency of RF1.

Its subcellular location is the cytoplasm. Peptide chain release factor 1 directs the termination of translation in response to the peptide chain termination codons UAG and UAA. The protein is Peptide chain release factor 1 of Clostridium botulinum (strain ATCC 19397 / Type A).